The primary structure comprises 242 residues: MYRLAKIISNAGVCSRRNAEKLIVGGKVKIDGITILSPATNVDISNQIEVSGRLINNIQKPRLWIYYKPIGLITTHKDPLSRKTVFEQLIGLPRVISIGRLDLNSEGLLLLTNSGDLAHQFEMPSSKLKRVYNVRAYGNANFLLKNNYNNLKIDGIFYNPYSIKLLRQNKNNSWFEVVLFEGKNREIRRIFEYFGLKVNKLIRVQYGALKIGNLKPGDYKEISNKILKKIISNKLTNYIDNR.

The 68-residue stretch at 2-69 folds into the S4 RNA-binding domain; it reads YRLAKIISNA…KPRLWIYYKP (68 aa). Asp-102 acts as the Nucleophile in catalysis.

Belongs to the pseudouridine synthase RsuA family.

It carries out the reaction a uridine in RNA = a pseudouridine in RNA. This is an uncharacterized protein from Rickettsia typhi (strain ATCC VR-144 / Wilmington).